Here is a 359-residue protein sequence, read N- to C-terminus: Protein LpfD (359 aa).

Residues 1-24 (MLKKLIMFTGLLGGSVLFSGQALA) form the signal peptide.

Belongs to the fimbrial protein family.

The protein localises to the fimbrium. In Salmonella typhimurium (strain LT2 / SGSC1412 / ATCC 700720), this protein is Protein LpfD (lpfD).